We begin with the raw amino-acid sequence, 103 residues long: Large ribosomal subunit protein uL24 (103 aa).

The protein belongs to the universal ribosomal protein uL24 family. In terms of assembly, part of the 50S ribosomal subunit.

In terms of biological role, one of two assembly initiator proteins, it binds directly to the 5'-end of the 23S rRNA, where it nucleates assembly of the 50S subunit. One of the proteins that surrounds the polypeptide exit tunnel on the outside of the subunit. The polypeptide is Large ribosomal subunit protein uL24 (Anoxybacillus flavithermus (strain DSM 21510 / WK1)).